A 197-amino-acid polypeptide reads, in one-letter code: Holliday junction branch migration complex subunit RuvA (197 aa).

The domain I stretch occupies residues 1 to 64; sequence MIGRLRGIVA…EDSVSLYGFL (64 aa). The domain II stretch occupies residues 65-143; that stretch reads REGERRLFRD…QFGAGGALPT (79 aa). The segment at 144-153 is flexible linker; that stretch reads GSGPAPADPL. The domain III stretch occupies residues 153–197; sequence LSDATVALQQLGYKPAEAARMARDAFNEGDEVATVIRKALQSALR.

This sequence belongs to the RuvA family. As to quaternary structure, homotetramer. Forms an RuvA(8)-RuvB(12)-Holliday junction (HJ) complex. HJ DNA is sandwiched between 2 RuvA tetramers; dsDNA enters through RuvA and exits via RuvB. An RuvB hexamer assembles on each DNA strand where it exits the tetramer. Each RuvB hexamer is contacted by two RuvA subunits (via domain III) on 2 adjacent RuvB subunits; this complex drives branch migration. In the full resolvosome a probable DNA-RuvA(4)-RuvB(12)-RuvC(2) complex forms which resolves the HJ.

It is found in the cytoplasm. Its function is as follows. The RuvA-RuvB-RuvC complex processes Holliday junction (HJ) DNA during genetic recombination and DNA repair, while the RuvA-RuvB complex plays an important role in the rescue of blocked DNA replication forks via replication fork reversal (RFR). RuvA specifically binds to HJ cruciform DNA, conferring on it an open structure. The RuvB hexamer acts as an ATP-dependent pump, pulling dsDNA into and through the RuvAB complex. HJ branch migration allows RuvC to scan DNA until it finds its consensus sequence, where it cleaves and resolves the cruciform DNA. The polypeptide is Holliday junction branch migration complex subunit RuvA (Stenotrophomonas maltophilia (strain K279a)).